We begin with the raw amino-acid sequence, 921 residues long: Protein translocase subunit SecA (921 aa).

ATP-binding positions include glutamine 87, 105–109 (GEGKT), and aspartate 515. The segment at 575 to 594 (RRIDNQLRGRSGRQGDPGSS) is disordered. Residues cysteine 905, cysteine 907, cysteine 916, and cysteine 917 each contribute to the Zn(2+) site.

This sequence belongs to the SecA family. As to quaternary structure, monomer and homodimer. Part of the essential Sec protein translocation apparatus which comprises SecA, SecYEG and auxiliary proteins SecDF-YajC and YidC. It depends on Zn(2+) as a cofactor.

The protein localises to the cell inner membrane. It localises to the cytoplasm. It carries out the reaction ATP + H2O + cellular proteinSide 1 = ADP + phosphate + cellular proteinSide 2.. In terms of biological role, part of the Sec protein translocase complex. Interacts with the SecYEG preprotein conducting channel. Has a central role in coupling the hydrolysis of ATP to the transfer of proteins into and across the cell membrane, serving both as a receptor for the preprotein-SecB complex and as an ATP-driven molecular motor driving the stepwise translocation of polypeptide chains across the membrane. The sequence is that of Protein translocase subunit SecA from Polynucleobacter necessarius subsp. necessarius (strain STIR1).